The chain runs to 395 residues: tRNA-specific 2-thiouridylase MnmA (395 aa).

ATP is bound by residues 6–13 (AMSGGVDS) and Leu-32. Catalysis depends on Cys-101, which acts as the Nucleophile. An intrachain disulfide couples Cys-101 to Cys-193. An ATP-binding site is contributed by Gly-125. An interaction with tRNA region spans residues 143–145 (KDQ). Catalysis depends on Cys-193, which acts as the Cysteine persulfide intermediate.

The protein belongs to the MnmA/TRMU family.

The protein resides in the cytoplasm. The enzyme catalyses S-sulfanyl-L-cysteinyl-[protein] + uridine(34) in tRNA + AH2 + ATP = 2-thiouridine(34) in tRNA + L-cysteinyl-[protein] + A + AMP + diphosphate + H(+). Catalyzes the 2-thiolation of uridine at the wobble position (U34) of tRNA, leading to the formation of s(2)U34. This chain is tRNA-specific 2-thiouridylase MnmA, found in Corynebacterium jeikeium (strain K411).